The sequence spans 572 residues: Capsid vertex component 2 (572 aa).

Residues 1-58 (MFRPRFEPMNLPKDSNKPSTLMVLADRLNFISCAEGSSKYASKLFEGTLIDAEIMTNR) are interaction with major capsid protein/MCP.

Belongs to the herpesviridae CVC2 protein family. Heterodimerizes with CVC1. Interacts with major capsid protein/MCP and triplex capsid protein 1/TRX1 at the pentamer vertices. Interacts with the large tegument protein/LTP.

Its subcellular location is the virion. It is found in the host nucleus. Capsid vertex-specific component that plays a role during viral DNA encapsidation, assuring correct genome cleavage and presumably stabilizing capsids that contain full-length viral genomes. Participates in the interaction between the capsid and the tegument through interaction with the large tegument protein/LTP. The polypeptide is Capsid vertex component 2 (Infectious laryngotracheitis virus (strain Thorne V882) (ILTV)).